The sequence spans 467 residues: ATP-dependent protease ATPase subunit HslU (467 aa).

ATP is bound by residues Val-20, 62-67 (GVGKTE), Asp-280, Glu-345, and Arg-417.

Belongs to the ClpX chaperone family. HslU subfamily. In terms of assembly, a double ring-shaped homohexamer of HslV is capped on each side by a ring-shaped HslU homohexamer. The assembly of the HslU/HslV complex is dependent on binding of ATP.

It is found in the cytoplasm. ATPase subunit of a proteasome-like degradation complex; this subunit has chaperone activity. The binding of ATP and its subsequent hydrolysis by HslU are essential for unfolding of protein substrates subsequently hydrolyzed by HslV. HslU recognizes the N-terminal part of its protein substrates and unfolds these before they are guided to HslV for hydrolysis. This is ATP-dependent protease ATPase subunit HslU from Enterococcus faecalis (strain ATCC 700802 / V583).